We begin with the raw amino-acid sequence, 163 residues long: Inorganic pyrophosphatase (163 aa).

Mg(2+) is bound at residue Glu-9. 3 residues coordinate substrate: Lys-17, Arg-31, and Tyr-43. Mg(2+) contacts are provided by Asp-53, Asp-58, Asp-85, and Asp-90. Asp-90 acts as the Proton acceptor in catalysis. A substrate-binding site is contributed by Tyr-127.

This sequence belongs to the PPase family. Homohexamer. It depends on Mg(2+) as a cofactor.

It localises to the cytoplasm. The enzyme catalyses diphosphate + H2O = 2 phosphate + H(+). Functionally, catalyzes the hydrolysis of inorganic pyrophosphate (PPi) forming two phosphate ions. The chain is Inorganic pyrophosphatase from Leifsonia xyli subsp. xyli (strain CTCB07).